A 216-amino-acid polypeptide reads, in one-letter code: uncharacterized protein (216 aa).

2 residues coordinate S-adenosyl-L-methionine: G56 and E77.

This sequence belongs to the methyltransferase superfamily. YrrT family.

Its function is as follows. Could be a S-adenosyl-L-methionine-dependent methyltransferase. This is an uncharacterized protein from Alkaliphilus oremlandii (strain OhILAs) (Clostridium oremlandii (strain OhILAs)).